Reading from the N-terminus, the 184-residue chain is uncharacterized protein (184 aa).

A disordered region spans residues 32-52; sequence PCPRSRTQGQSRRSETHTISR.

It is found in the mitochondrion. This is an uncharacterized protein from Arabidopsis thaliana (Mouse-ear cress).